The sequence spans 677 residues: Beta-galactosidase (677 aa).

The signal sequence occupies residues 1–23 (MPGFLVRILPLLLVLLLLGPTRG). A propeptide spanning residues 24–28 (LRNAT) is cleaved from the precursor. Asparagine 26 carries N-linked (GlcNAc...) asparagine glycosylation. Substrate contacts are provided by tyrosine 83, glutamate 129, and asparagine 187. Glutamate 188 (proton donor) is an active-site residue. Cysteine 195 and cysteine 230 are disulfide-bonded. The N-linked (GlcNAc...) asparagine glycan is linked to asparagine 247. Glutamate 268 serves as the catalytic Nucleophile. Position 333 (tyrosine 333) interacts with substrate. Residues asparagine 464, asparagine 498, asparagine 542, asparagine 545, and asparagine 555 are each glycosylated (N-linked (GlcNAc...) asparagine). A disulfide bridge connects residues cysteine 626 and cysteine 634. Positions 650–677 (YDHPSKPVEKRLMPPPPQKNKDSWLDHV) are disordered. Basic and acidic residues-rich tracts occupy residues 652–661 (HPSKPVEKRL) and 668–677 (KNKDSWLDHV).

This sequence belongs to the glycosyl hydrolase 35 family. Homodimer. May form higher multimers. Detected in placenta (at protein level). Detected in fibroblasts and testis.

The protein resides in the lysosome. It is found in the cytoplasm. The protein localises to the perinuclear region. It catalyses the reaction Hydrolysis of terminal non-reducing beta-D-galactose residues in beta-D-galactosides.. In terms of biological role, cleaves beta-linked terminal galactosyl residues from gangliosides, glycoproteins, and glycosaminoglycans. Its function is as follows. Has no beta-galactosidase catalytic activity, but plays functional roles in the formation of extracellular elastic fibers (elastogenesis) and in the development of connective tissue. Seems to be identical to the elastin-binding protein (EBP), a major component of the non-integrin cell surface receptor expressed on fibroblasts, smooth muscle cells, chondroblasts, leukocytes, and certain cancer cell types. In elastin producing cells, associates with tropoelastin intracellularly and functions as a recycling molecular chaperone which facilitates the secretions of tropoelastin and its assembly into elastic fibers. This Homo sapiens (Human) protein is Beta-galactosidase (GLB1).